The following is a 985-amino-acid chain: MTVELKRNLLESSVEDIDLESKKQRVDNDVDQNTSSVDEDIDYEEDYDEVNDVPIDSGNSLFNNNAKWQETISKVVKSVVSIHFSQVAPFDSEAALVSEATGFIVDAKLGIILTNRHVVGPGPFIGYAIFDNHEECDVIPIYRDPVHDFGFLKFDPSKLKYIEVTALELKPSLAKVGSEIRVVGNDAGEKLSILSGFISRLDRNAPDYGELTYNDFNTEYIQAAAAASGGSSGSPVITVEGYAVALQAGGSSEASTDFFLPLDRVVRALQCVQTDKPITRGTIQTQWVLKPFDECRRLGLSEDREKEARKRFPGKTGLLVAEAILREGPAYNKVQEGDTLISINGTPICSFIQVDNILDSSVGDEIIIVVQRGSKDISFRCTVGDLHIITPSRYVEVCGANFHELSYQMARCYALPVKGVFVASATGSFDLDPKEKTGWVIDFVDNKETPTLDDFIEVMKTIPDEKRVIVKFHNLTDVQTQRITSVYIDRHWCSEFRIYTRNDKTGIWDYEKITEKLPPLPIKPQKAKILDLPINDNKKLAKMSHSLCVVHSVIAITMDSMEPEPTNGCGLVLDAEKGYVIVSRSFVPHDCLNTFVSFAESILVPAKVVFLHPTQNYAIVQYDPSLVDAPVCTPVLANERLERGDETNFIGYMYSNTLISSKTKVNGISSLSVPNDIIPRYRATNLEVISIDSNISTKCKSGILAADDGTVRAIWLSCMGNKEKLYLMGLDVVDIKEVVDILRAGKNPKVSIVDAGFDSISLLQARIRGVPEEWIKMMEEESENRLQFISVTRNSYTTIKERLEPGDIILSVNGKLVKRMRDIGGVVGTDDDTDIESELLFKVVRDAKVIDLKIKTVQIEETTRIVVFAGCVLQAPHHAVRQVKTSIPSEVYAVSRGTSSLALQYGIEVTNFITHVNDQSTPDLDTFLKVVKEIPDNTYCKLRLMTFDDVPFAISLKTNYHYFPTVELRKNPKTGSWIENDISET.

The segment at Val79–Leu269 is serine protease. Active-site charge relay system residues include His117, Asp148, and Ser231. 2 consecutive PDZ domains span residues Trp287 to Asp385 and Pro771 to Ala847.

It belongs to the peptidase S1C family.

It localises to the nucleus. Nuclear serine protease which mediates apoptosis. In Kluyveromyces lactis (strain ATCC 8585 / CBS 2359 / DSM 70799 / NBRC 1267 / NRRL Y-1140 / WM37) (Yeast), this protein is Pro-apoptotic serine protease NMA111 (NMA111).